A 109-amino-acid polypeptide reads, in one-letter code: MDSFGRAPPLWPQSALPRVPGAAPSSSGLPWSRVGEIAIFTFVAVLALYLLWSWVGRDLLLVLKARRGGTTEELTFGPRERHSLPAVAVARVENPPCPSGSVEARPFTG.

A disordered region spans residues 1–28; it reads MDSFGRAPPLWPQSALPRVPGAAPSSSG. A helical membrane pass occupies residues 34-54; the sequence is VGEIAIFTFVAVLALYLLWSW.

Belongs to the mastrevirus movement protein family. As to quaternary structure, interacts with the capsid protein (CP). Part of a MP-CP-viral DNA complex.

The protein resides in the host membrane. Involved in the viral transport within, and between cells. The polypeptide is Movement protein (Sugarcane streak virus (isolate South Africa) (SSV)).